Here is a 510-residue protein sequence, read N- to C-terminus: Probable gamma-aminobutyrate transaminase 3, mitochondrial (510 aa).

The N-terminal 41 residues, 1–41, are a transit peptide targeting the mitochondrion; it reads MICRSLLLLRSNAASKASSIVKHVAATGCLPEYSSEAPARY. A pyridoxal 5'-phosphate-binding site is contributed by 166-167; sequence GS. Position 199 (tyrosine 199) interacts with substrate. A pyridoxal 5'-phosphate-binding site is contributed by aspartate 306. Lysine 335 provides a ligand contact to substrate. Position 335 is an N6-(pyridoxal phosphate)lysine (lysine 335).

Belongs to the class-III pyridoxal-phosphate-dependent aminotransferase family.

The protein resides in the mitochondrion. The enzyme catalyses 4-aminobutanoate + pyruvate = succinate semialdehyde + L-alanine. It catalyses the reaction 4-aminobutanoate + glyoxylate = succinate semialdehyde + glycine. Its function is as follows. Transaminase that degrades gamma-amino butyric acid (GABA). The protein is Probable gamma-aminobutyrate transaminase 3, mitochondrial of Oryza sativa subsp. indica (Rice).